A 529-amino-acid chain; its full sequence is Glutamyl-tRNA(Gln) amidotransferase subunit B-2, chloroplastic/mitochondrial (529 aa).

The tract at residues Ser-17–Val-61 is disordered.

This sequence belongs to the GatB/GatE family. GatB subfamily. In terms of assembly, subunit of the heterotrimeric GatCAB amidotransferase (AdT) complex, composed of A, B and C subunits.

It is found in the mitochondrion. The protein resides in the plastid. It localises to the chloroplast. The enzyme catalyses L-glutamyl-tRNA(Gln) + L-glutamine + ATP + H2O = L-glutaminyl-tRNA(Gln) + L-glutamate + ADP + phosphate + H(+). Its function is as follows. Allows the formation of correctly charged Gln-tRNA(Gln) through the transamidation of misacylated Glu-tRNA(Gln) in chloroplasts and mitochondria. The reaction takes place in the presence of glutamine and ATP through an activated gamma-phospho-Glu-tRNA(Gln). The sequence is that of Glutamyl-tRNA(Gln) amidotransferase subunit B-2, chloroplastic/mitochondrial from Micromonas commoda (strain RCC299 / NOUM17 / CCMP2709) (Picoplanktonic green alga).